The primary structure comprises 158 residues: Transcriptional repressor NrdR (158 aa).

Residues 3–34 fold into a zinc finger; that stretch reads CPSCQNTDSRVLESRAAEGGRSVRRRRECLNC. An ATP-cone domain is found at 49 to 139; sequence ITVIKRNGHR…VYRHFRSVSD (91 aa).

The protein belongs to the NrdR family. It depends on Zn(2+) as a cofactor.

In terms of biological role, negatively regulates transcription of bacterial ribonucleotide reductase nrd genes and operons by binding to NrdR-boxes. The chain is Transcriptional repressor NrdR from Synechococcus sp. (strain CC9311).